The chain runs to 389 residues: Galactokinase (389 aa).

34–37 (EHTD) is a binding site for substrate. Residues S68 and 125-131 (GSGLSSS) each bind ATP. The Mg(2+) site is built by S131 and E163. D175 acts as the Proton acceptor in catalysis. A substrate-binding site is contributed by Y225.

The protein belongs to the GHMP kinase family. GalK subfamily.

Its subcellular location is the cytoplasm. It carries out the reaction alpha-D-galactose + ATP = alpha-D-galactose 1-phosphate + ADP + H(+). It participates in carbohydrate metabolism; galactose metabolism. Catalyzes the transfer of the gamma-phosphate of ATP to D-galactose to form alpha-D-galactose-1-phosphate (Gal-1-P). This Clostridium acetobutylicum (strain ATCC 824 / DSM 792 / JCM 1419 / IAM 19013 / LMG 5710 / NBRC 13948 / NRRL B-527 / VKM B-1787 / 2291 / W) protein is Galactokinase.